The following is a 501-amino-acid chain: ATP synthase subunit alpha (501 aa).

Residue 169-176 (GDRQTGKT) coordinates ATP.

This sequence belongs to the ATPase alpha/beta chains family. F-type ATPases have 2 components, CF(1) - the catalytic core - and CF(0) - the membrane proton channel. CF(1) has five subunits: alpha(3), beta(3), gamma(1), delta(1), epsilon(1). CF(0) has three main subunits: a(1), b(2) and c(9-12). The alpha and beta chains form an alternating ring which encloses part of the gamma chain. CF(1) is attached to CF(0) by a central stalk formed by the gamma and epsilon chains, while a peripheral stalk is formed by the delta and b chains.

The protein resides in the cell membrane. It catalyses the reaction ATP + H2O + 4 H(+)(in) = ADP + phosphate + 5 H(+)(out). Produces ATP from ADP in the presence of a proton gradient across the membrane. The alpha chain is a regulatory subunit. This is ATP synthase subunit alpha from Streptococcus thermophilus (strain CNRZ 1066).